Here is a 280-residue protein sequence, read N- to C-terminus: Four and a half LIM domains protein 1 (280 aa).

Position 2 is an N-acetylserine (Ser2). Lys4 is subject to N6-acetyllysine. The C4-type zinc finger occupies 7–31; that stretch reads CHYCRDPLQGKKYVQKDGRHCCLKC. 4 consecutive LIM zinc-binding domains span residues 40–92, 101–153, 162–212, and 221–276; these read CVDC…CNKC, CKGC…CVTC, CVKC…CVDC, and CAGC…CPDC. Residue Lys86 forms a Glycyl lysine isopeptide (Lys-Gly) (interchain with G-Cter in SUMO2) linkage.

As to expression, isoform 1 seems to be most abundant in each tissue and isoform 2 much less abundant. Isoform 1 is highly expressed in skeletal muscle and lung, and to a lesser extent in heart, brain and kidney. Isoform 2 was found in brain, lung kidney and genital organs.

It localises to the cytoplasm. The protein resides in the nucleus. Its function is as follows. May have an involvement in muscle development or hypertrophy. Isoform 2 binds to RBP-J and plays a negative regulatory role in the RBP-J-mediated transcription in mammalian systems. The polypeptide is Four and a half LIM domains protein 1 (Fhl1) (Mus musculus (Mouse)).